The chain runs to 305 residues: Putative lipid kinase SAR0780 (305 aa).

The 137-residue stretch at 3-139 (NKYTHGVLFY…YDVIKINNQY (137 aa)) folds into the DAGKc domain. ATP is bound by residues S44, 74–80 (GDGTVNE), and T101. S220, D223, and E225 together coordinate Mg(2+). E281 functions as the Proton acceptor in the catalytic mechanism.

It belongs to the diacylglycerol/lipid kinase family. Requires Mg(2+) as cofactor.

Its function is as follows. May catalyze the ATP-dependent phosphorylation of lipids other than diacylglycerol (DAG). In fact, is not able to exhibit diacylglycerol kinase activity in vitro. The polypeptide is Putative lipid kinase SAR0780 (Staphylococcus aureus (strain MRSA252)).